A 347-amino-acid polypeptide reads, in one-letter code: Putative GDP-L-fucose synthase 2 (347 aa).

Residues 1–20 are disordered; it reads MPSQQRSSSGSTAKAGDADG. 41 to 47 serves as a coordination point for NADP(+); it reads GHRGMVG. Y168 acts as the Proton donor/acceptor in catalysis. Residues K172, 195–198, and H211 contribute to the NADP(+) site; that span reads PNNL. Positions 219, 234, 241, and 301 each coordinate substrate.

It belongs to the NAD(P)-dependent epimerase/dehydratase family. Fucose synthase subfamily. In terms of assembly, homodimer.

It carries out the reaction GDP-beta-L-fucose + NADP(+) = GDP-4-dehydro-alpha-D-rhamnose + NADPH + H(+). The protein operates within nucleotide-sugar biosynthesis; GDP-L-fucose biosynthesis via de novo pathway; GDP-L-fucose from GDP-alpha-D-mannose: step 2/2. Catalyzes the two-step NADP-dependent conversion of GDP-4-dehydro-6-deoxy-D-mannose to GDP-fucose, involving an epimerase and a reductase reaction. The sequence is that of Putative GDP-L-fucose synthase 2 from Oryza sativa subsp. japonica (Rice).